The chain runs to 383 residues: Mannan endo-1,4-beta-mannosidase (383 aa).

The N-terminal stretch at 1–35 (MRNARSTLITTAGMAFAVLGLLFALAGPSAGRAEA) is a signal peptide. One can recognise a CBM10 domain in the interval 339 to 377 (GGSTGGTAPNGYPYCVNGGASDPDGDGWGWENSRSCVVR).

Belongs to the glycosyl hydrolase 5 (cellulase A) family. Monomer.

It catalyses the reaction Random hydrolysis of (1-&gt;4)-beta-D-mannosidic linkages in mannans, galactomannans and glucomannans.. The sequence is that of Mannan endo-1,4-beta-mannosidase (manA) from Streptomyces lividans.